A 412-amino-acid polypeptide reads, in one-letter code: Phospholipase A1-IIdelta (412 aa).

N-acetylalanine is present on Ala-2. The active-site Acyl-ester intermediate is Ser-238. Active-site charge relay system residues include Ser-238, Asp-297, and His-336.

The protein belongs to the AB hydrolase superfamily. Lipase family. In terms of tissue distribution, expressed in leaves, stems, flowers and siliques, and, at low levels, in seeds and roots (at protein level).

The protein localises to the cytoplasm. Functionally, acylhydrolase that catalyzes the hydrolysis of phosphatidylcholine (PC) at the sn-1 position. High activity toward PC, medium activity toward monogalactosyldiacylglycerol (MGDG) and low activity toward triacylglycerol (TAG). Confers sensitivity to UV-B radiation probably by deesterifying membrane phospholipids. This Arabidopsis thaliana (Mouse-ear cress) protein is Phospholipase A1-IIdelta.